The following is a 777-amino-acid chain: MNSKDISSKKLTLQGFSKLKLDFNLSSSASPSMGATIVKKRRRKTHDTEEQDENKLLGSLTKKEQISRINAVQNAALLKERNLKEKEAIVKKDSIVKEDSNEKTNDRDSATNTSFKETGKEVLNDVSLVELIENNTDNEDNNKKSLKTNKDIYSKHSKRIIAQSIDDKIEQPSVFKQRFGIRNRKSEFTKGKNISREVIIPDEITIKELSIRMAEDSKSVLKMLKEEMGENYGVDGLVDPEVACEIVEKFNHTAKRVSGANKEKNLFFIEERESLPKKPKPPIVTFMGHVDHGKTSLLDAFRESNVAERELGGITQHIGAYQIITKDKKITFIDTPGHEAFTAMRACGANITNIVVIVVAADDGVMKQTIEAMNHAKAANVSIIVAINKIDRSQSGDVERIISSLPQYDLIPEELGGDVIVVPVSAKKKINLDKLEEAILLIAELMKLEAIEDCRALGWVIESKIDKAKGISATLIVEEGTLKVGDMLVVGTAYGKVRSMVNHLGQREKVALPSSPIEITGLNGIPNAGDKFVVVSSEKQAREIAEYRLELIKEKKEDLSNNNLDMFSRNDSEVEELSVVLKCDVTGSIEAISNSIDKLGKDQVKLNILHKAVGGITDSDVLLAEASSAVILAFNVKVDSKIRDLAKRKGVEIHTYSIIYELIDDMRMYLTKMLKPVTREVRIGSASVRQIFNVSRVGNIIGCYVSDGVVKKDSLIKVMRNNKLIYEGKLKALRRFKDNVKEVGTNFECGVSLDGNVDIKVGDILEAHQLVQEERVL.

2 disordered regions span residues 30–54 (SPSM…QDEN) and 98–117 (EDSN…SFKE). The segment covering 98 to 109 (EDSNEKTNDRDS) has biased composition (basic and acidic residues). Residues 279–449 (PKPPIVTFMG…LLIAELMKLE (171 aa)) form the tr-type G domain. The segment at 288–295 (GHVDHGKT) is G1. 288-295 (GHVDHGKT) serves as a coordination point for GTP. Residues 313 to 317 (GITQH) form a G2 region. The segment at 334–337 (DTPG) is G3. GTP-binding positions include 334 to 338 (DTPGH) and 388 to 391 (NKID). Residues 388–391 (NKID) form a G4 region. The tract at residues 425-427 (SAK) is G5.

The protein belongs to the TRAFAC class translation factor GTPase superfamily. Classic translation factor GTPase family. IF-2 subfamily.

The protein localises to the cytoplasm. Its function is as follows. One of the essential components for the initiation of protein synthesis. Protects formylmethionyl-tRNA from spontaneous hydrolysis and promotes its binding to the 30S ribosomal subunits. Also involved in the hydrolysis of GTP during the formation of the 70S ribosomal complex. The sequence is that of Translation initiation factor IF-2 from Wolbachia sp. subsp. Brugia malayi (strain TRS).